The primary structure comprises 205 residues: Ribosomal RNA small subunit methyltransferase G (205 aa).

Residues glycine 76, leucine 81, 127-128 (IE), and arginine 140 each bind S-adenosyl-L-methionine.

The protein belongs to the methyltransferase superfamily. RNA methyltransferase RsmG family.

It is found in the cytoplasm. The enzyme catalyses guanosine(527) in 16S rRNA + S-adenosyl-L-methionine = N(7)-methylguanosine(527) in 16S rRNA + S-adenosyl-L-homocysteine. Its function is as follows. Specifically methylates the N7 position of guanine in position 527 of 16S rRNA. In Francisella tularensis subsp. tularensis (strain WY96-3418), this protein is Ribosomal RNA small subunit methyltransferase G.